We begin with the raw amino-acid sequence, 142 residues long: Transcriptional regulator MraZ (142 aa).

2 consecutive SpoVT-AbrB domains span residues 5–47 and 76–119; these read EYPY…PLAS and ANKA…NPGR.

It belongs to the MraZ family. As to quaternary structure, forms oligomers.

It is found in the cytoplasm. It localises to the nucleoid. The chain is Transcriptional regulator MraZ from Deinococcus deserti (strain DSM 17065 / CIP 109153 / LMG 22923 / VCD115).